The sequence spans 88 residues: MPNTKSAEKALRVADANRQENRRAKSQVKTSLTKVKKLVDAGSINEAETAAVSAQSNLDKAAEKGIIHPKNAARRKSRLMKKLNQAAK.

Residues 1–23 (MPNTKSAEKALRVADANRQENRR) show a composition bias toward basic and acidic residues. The disordered stretch occupies residues 1-29 (MPNTKSAEKALRVADANRQENRRAKSQVK).

This sequence belongs to the bacterial ribosomal protein bS20 family.

Binds directly to 16S ribosomal RNA. This chain is Small ribosomal subunit protein bS20, found in Dehalococcoides mccartyi (strain ATCC BAA-2100 / JCM 16839 / KCTC 5957 / BAV1).